Here is a 261-residue protein sequence, read N- to C-terminus: 14-3-3 protein 8 (261 aa).

The interval 237 to 261 (DIPEDGEEAPKGDAANKVGAGEDAE) is disordered.

It belongs to the 14-3-3 family. Homodimer.

This Solanum lycopersicum (Tomato) protein is 14-3-3 protein 8 (TFT8).